Reading from the N-terminus, the 590-residue chain is DNA mismatch repair protein MutL (590 aa).

The protein belongs to the DNA mismatch repair MutL/HexB family.

This protein is involved in the repair of mismatches in DNA. It is required for dam-dependent methyl-directed DNA mismatch repair. May act as a 'molecular matchmaker', a protein that promotes the formation of a stable complex between two or more DNA-binding proteins in an ATP-dependent manner without itself being part of a final effector complex. The chain is DNA mismatch repair protein MutL from Caldanaerobacter subterraneus subsp. tengcongensis (strain DSM 15242 / JCM 11007 / NBRC 100824 / MB4) (Thermoanaerobacter tengcongensis).